The following is a 3503-amino-acid chain: Protein dachsous (3503 aa).

The first 20 residues, 1-20 (MLRSSLLILLAIVLLGSSQA), serve as a signal peptide directing secretion. The Extracellular segment spans residues 21-3045 (ASHDQERERK…SSSGSIGDWA (3025 aa)). Cadherin domains follow at residues 22 to 121 (SHDQ…APTF), 122 to 233 (PQTS…QPIF), 234 to 340 (NQSR…QPTI), 345 to 451 (LSDD…PPEF), 452 to 558 (EQDL…EPIF), 559 to 662 (DQSF…RPVF), 663 to 774 (YPRE…PPIF), 775 to 878 (EKAR…APEF), 879 to 983 (EASM…PPVF), 984 to 1100 (EKDE…DPKF), 1101 to 1203 (QKSK…APEI), 1205 to 1312 (DPQE…RPTF), 1313 to 1432 (TSSS…APEW), and 1433 to 1549 (PQDP…APHF). 2 N-linked (GlcNAc...) asparagine glycosylation sites follow: asparagine 220 and asparagine 234. Position 236 is a phosphoserine (serine 236). 3 N-linked (GlcNAc...) asparagine glycosylation sites follow: asparagine 245, asparagine 381, and asparagine 416. Asparagine 564, asparagine 594, and asparagine 743 each carry an N-linked (GlcNAc...) asparagine glycan. 6 N-linked (GlcNAc...) asparagine glycosylation sites follow: asparagine 966, asparagine 991, asparagine 1006, asparagine 1029, asparagine 1143, and asparagine 1236. Asparagine 1453, asparagine 1479, asparagine 1524, and asparagine 1553 each carry an N-linked (GlcNAc...) asparagine glycan. Cadherin domains follow at residues 1556-1666 (GGKT…PPRF), 1667-1794 (LQAV…SPEF), 1796-1899 (PGSC…APRF), 1900-2004 (KLSK…RPIF), 2005-2111 (ERYP…TPVL), 2114-2269 (QNET…SPKF), 2270-2375 (SQKQ…QPTF), 2375-2479 (FPPN…APVF), 2489-2595 (AILP…RSQF), 2596-2699 (LQNQ…FPIF), 2701-2809 (RSAK…EPKF), 2810-2916 (PLTE…TPQF), and 2919-3028 (RTYR…HPGT). Residues asparagine 1700, asparagine 1884, and asparagine 1940 are each glycosylated (N-linked (GlcNAc...) asparagine). The N-linked (GlcNAc...) asparagine glycan is linked to asparagine 2115. Residues 2193 to 2225 (GRALHYEEEIDESSEEDPNNSTRSQRALTSSSF) form a disordered region. A compositionally biased stretch (acidic residues) spans 2200–2210 (EEIDESSEEDP). N-linked (GlcNAc...) asparagine glycans are attached at residues asparagine 2211 and asparagine 2212. Residues 2211–2225 (NNSTRSQRALTSSSF) are compositionally biased toward polar residues. N-linked (GlcNAc...) asparagine glycosylation is found at asparagine 2421, asparagine 2511, asparagine 2520, asparagine 2547, asparagine 2588, and asparagine 2678. Residues asparagine 2845 and asparagine 2967 are each glycosylated (N-linked (GlcNAc...) asparagine). The helical transmembrane segment at 3046–3066 (IGLLVAFLLVLCAAAGIFLFI) threads the bilayer. The Cytoplasmic portion of the chain corresponds to 3067–3503 (HMRSRKPRNA…SQRGNVGTRM (437 aa)). Disordered stretches follow at residues 3114–3195 (AGAA…GRIS), 3360–3404 (LSEH…IPPP), and 3431–3503 (LPRS…GTRM). 2 stretches are compositionally biased toward low complexity: residues 3133-3159 (GAHAGSSGAATTSELSGSEQSGSSGRG) and 3363-3372 (HSGSGASSSA). Residues 3391-3404 (KPPPSAPPTHIPPP) show a composition bias toward pro residues. Low complexity predominate over residues 3440–3463 (ASGSFSTSSAMSPSFSPSLSPLAT). Residues serine 3465 and serine 3469 each carry the phosphoserine modification. The span at 3492–3503 (QPSQRGNVGTRM) shows a compositional bias: polar residues.

As to quaternary structure, interacts (via cytoplasmic region) with Myo31DF. Phosphorylated by fj on Ser/Thr of cadherin domains. Expressed in embryonic ectoderm. In larvae, expression is restricted to imaginal disks and brain.

It localises to the cell membrane. The protein localises to the cell junction. Functionally, required for normal morphogenesis of adult structures derived from imaginal disks. Plays a role in planar cell polarity and in determining body left-right asymmetry. Expression in segment H1 of the imaginal ring and interaction with Myo31DF are required to induce changes of cell shape and orientation in segment H2, which then gives rise to normal, dextral looping of the adult hindgut. The sequence is that of Protein dachsous (ds) from Drosophila melanogaster (Fruit fly).